The following is a 392-amino-acid chain: MHEVATTVSSAEMSSPPVAESWCYTQVKVVKFSYMWTINNFSFCREETGEVLKSSSFSSGPNDKLKWCLRVNPKGLDDESKDYLSLYLLLVSCPKNEVRAKFKFSLLNSKNEETKAMESQRAYRFVQGKDWGFKKYIRRDFLLDEANGLLPDDKLTLYCEVSVVQDSINISGQSSSNNLKVPECRLAEDMGYLWENRRFTDCSLFVEGKEFKAHKSILAARSPVFSAMFEHPMQESRKNRVYIRDVDPEVFKEMMRFIYTGGTPHVDKMADKLLAAADKYALERLKVMCEESLCNNLTVENVADVLILADLHSAEQLKAQAIDFINRCSVLGQLGCKDRKNCNSNQTMDIMETAGWKSMIKSHPHLVAEAFRALASAQCPPFGIPRKRLKQS.

Positions 31–161 constitute an MATH domain; sequence KFSYMWTINN…DDKLTLYCEV (131 aa). Residues 200-267 form the BTB domain; sequence TDCSLFVEGK…IYTGGTPHVD (68 aa).

It belongs to the Tdpoz family. As to quaternary structure, homodimer. Heterodimer with SPOP. Component of cullin-RING-based BCR (BTB-CUL3-RBX1) E3 ubiquitin-protein ligase complexes containing homodimeric SPOPL or the heterodimer formed by SPOP and SPOPL.

It is found in the nucleus. It participates in protein modification; protein ubiquitination. Its function is as follows. Component of a cullin-RING-based BCR (BTB-CUL3-RBX1) E3 ubiquitin-protein ligase complex that mediates the ubiquitination and subsequent proteasomal degradation of target proteins, but with relatively low efficiency. This is Speckle-type POZ protein-like (spopl) from Xenopus laevis (African clawed frog).